A 389-amino-acid polypeptide reads, in one-letter code: GTPase Obg (389 aa).

The Obg domain occupies 1–159; it reads MKFVDEAVIK…RELRLELLLL (159 aa). One can recognise an OBG-type G domain in the interval 160–333; the sequence is ADVGLLGMPN…LAEKLFDFIK (174 aa). GTP-binding positions include 166-173, 191-195, 213-216, 283-286, and 314-316; these read GMPNAGKS, FTTLV, DIPG, NKTD, and SAA. The Mg(2+) site is built by Ser173 and Thr193.

Belongs to the TRAFAC class OBG-HflX-like GTPase superfamily. OBG GTPase family. In terms of assembly, monomer. Requires Mg(2+) as cofactor.

The protein resides in the cytoplasm. An essential GTPase which binds GTP, GDP and possibly (p)ppGpp with moderate affinity, with high nucleotide exchange rates and a fairly low GTP hydrolysis rate. Plays a role in control of the cell cycle, stress response, ribosome biogenesis and in those bacteria that undergo differentiation, in morphogenesis control. The polypeptide is GTPase Obg (Shewanella amazonensis (strain ATCC BAA-1098 / SB2B)).